The primary structure comprises 608 residues: Glutamine--fructose-6-phosphate aminotransferase [isomerizing] (608 aa).

Residue Cys2 is the Nucleophile; for GATase activity of the active site. The region spanning 2–217 is the Glutamine amidotransferase type-2 domain; the sequence is CGIVGILGRE…DGDWVVLTRN (216 aa). SIS domains follow at residues 284–423 and 456–598; these read LPFD…ARGE and LARE…VDQP. Catalysis depends on Lys603, which acts as the For Fru-6P isomerization activity.

In terms of assembly, homodimer.

The protein resides in the cytoplasm. It carries out the reaction D-fructose 6-phosphate + L-glutamine = D-glucosamine 6-phosphate + L-glutamate. Catalyzes the first step in hexosamine metabolism, converting fructose-6P into glucosamine-6P using glutamine as a nitrogen source. In Bradyrhizobium diazoefficiens (strain JCM 10833 / BCRC 13528 / IAM 13628 / NBRC 14792 / USDA 110), this protein is Glutamine--fructose-6-phosphate aminotransferase [isomerizing] (glmS).